The chain runs to 120 residues: Large ribosomal subunit protein uL18 (120 aa).

Belongs to the universal ribosomal protein uL18 family. In terms of assembly, part of the 50S ribosomal subunit; part of the 5S rRNA/L5/L18/L25 subcomplex. Contacts the 5S and 23S rRNAs.

Its function is as follows. This is one of the proteins that bind and probably mediate the attachment of the 5S RNA into the large ribosomal subunit, where it forms part of the central protuberance. The polypeptide is Large ribosomal subunit protein uL18 (Lawsonia intracellularis (strain PHE/MN1-00)).